The chain runs to 349 residues: Farnesyl pyrophosphate synthase (349 aa).

Lys48, Arg51, and Gln90 together coordinate isopentenyl diphosphate. Mg(2+)-binding residues include Asp97 and Asp101. Arg106 lines the dimethylallyl diphosphate pocket. Arg107 lines the isopentenyl diphosphate pocket. Positions 194, 195, 234, 251, and 260 each coordinate dimethylallyl diphosphate.

This sequence belongs to the FPP/GGPP synthase family. Requires Mg(2+) as cofactor.

It is found in the cytoplasm. The catalysed reaction is isopentenyl diphosphate + dimethylallyl diphosphate = (2E)-geranyl diphosphate + diphosphate. It carries out the reaction isopentenyl diphosphate + (2E)-geranyl diphosphate = (2E,6E)-farnesyl diphosphate + diphosphate. Its pathway is isoprenoid biosynthesis; farnesyl diphosphate biosynthesis; farnesyl diphosphate from geranyl diphosphate and isopentenyl diphosphate: step 1/1. It functions in the pathway isoprenoid biosynthesis; geranyl diphosphate biosynthesis; geranyl diphosphate from dimethylallyl diphosphate and isopentenyl diphosphate: step 1/1. Functionally, catalyzes the sequential condensation of isopentenyl pyrophosphate with the allylic pyrophosphates, dimethylallyl pyrophosphate, and then with the resultant geranylpyrophosphate to the ultimate product farnesyl pyrophosphate. The sequence is that of Farnesyl pyrophosphate synthase (FPS1) from Kluyveromyces lactis (strain ATCC 8585 / CBS 2359 / DSM 70799 / NBRC 1267 / NRRL Y-1140 / WM37) (Yeast).